Reading from the N-terminus, the 301-residue chain is uncharacterized protein (301 aa).

It belongs to the asfivirus E301R family. As to quaternary structure, interacts with host IRF3.

Functionally, plays a role in the inhibition of host innate immune system by acting as a negatively regulator of type I interferon production. Mechanistically, interacts with and prevents host IRF3 nuclear localization to inhibit its transcriptional activity. This is an uncharacterized protein from African swine fever virus (strain Badajoz 1971 Vero-adapted) (Ba71V).